A 404-amino-acid polypeptide reads, in one-letter code: Immediate early response gene 5-like protein (404 aa).

Disordered regions lie at residues 86–107, 160–231, and 308–327; these read AADF…EPAA, AALQ…APAS, and QEEE…EPPG. The segment covering 177–194 has biased composition (pro residues); sequence PLQPGPAPLPLPLPPPAP. Residues 195-231 show a composition bias toward low complexity; that stretch reads AALCPRDPRAPAACSAPPGAAPPAAAASPPASPAPAS. Positions 308–318 are enriched in acidic residues; it reads QEEEEDDEEDA.

The protein belongs to the IER family.

The sequence is that of Immediate early response gene 5-like protein (IER5L) from Homo sapiens (Human).